Reading from the N-terminus, the 209-residue chain is Uracil phosphoribosyltransferase (209 aa).

5-phospho-alpha-D-ribose 1-diphosphate is bound by residues Arg79, Arg104, and Asp131–Thr139. Uracil-binding positions include Ile194 and Gly199 to Ala201. 5-phospho-alpha-D-ribose 1-diphosphate is bound at residue Asp200.

Belongs to the UPRTase family. It depends on Mg(2+) as a cofactor.

The catalysed reaction is UMP + diphosphate = 5-phospho-alpha-D-ribose 1-diphosphate + uracil. It participates in pyrimidine metabolism; UMP biosynthesis via salvage pathway; UMP from uracil: step 1/1. Its activity is regulated as follows. Allosterically activated by GTP. In terms of biological role, catalyzes the conversion of uracil and 5-phospho-alpha-D-ribose 1-diphosphate (PRPP) to UMP and diphosphate. In Caulobacter sp. (strain K31), this protein is Uracil phosphoribosyltransferase.